Here is a 120-residue protein sequence, read N- to C-terminus: Transcription elongation factor SPT4 (120 aa).

The interaction with spt-5 stretch occupies residues 1–39 (MAASIPSDLRNLRACLLCSLIKSVDAFQTDGCENCDEVL). Residues 15–35 (CLLCSLIKSVDAFQTDGCENC) form a C4-type zinc finger.

It belongs to the SPT4 family. In terms of assembly, interacts with spt-5 to form DSIF. DSIF interacts with RNA polymerase II and with the positive transcription elongation factor b complex (P-TEFb complex), which is composed of cdk-9 and cyclin-T.

It is found in the nucleus. Functionally, may function as a component of the DRB sensitivity-inducing factor complex (DSIF complex), which regulates transcription elongation by RNA polymerase II. DSIF may enhance transcriptional pausing at sites proximal to the promoter, which may in turn facilitate the assembly of an elongation competent RNA polymerase II complex. This is Transcription elongation factor SPT4 (spt-4) from Caenorhabditis briggsae.